Here is a 274-residue protein sequence, read N- to C-terminus: MTNVFTIDAFREEVKKKYEPVTIGISEDVTVELKPLLKLGQKAREAVVEAVKEVEDIPDIDEDDEEAEELVDEYSLRICEIVAKVFRLIATKPKKLIAALDEEEDPRIRAELYATVLRTWMVETQLGESRALAELIDKFGGAILSDLSEYHGVDLRDLFRDEDPLSPRYVLNLVIHLPKTGAFYAERRGGQQYRGWDEDRYALADIYDAVQAGNHILLMANRDPKKPKPKAPKAYPRPDDFEKTTPKPGSFAAMVVAAKKAAREKREREEANAE.

The tract at residues 221 to 250 (NRDPKKPKPKAPKAYPRPDDFEKTTPKPGS) is disordered. The segment covering 236-245 (PRPDDFEKTT) has biased composition (basic and acidic residues).

The protein belongs to the L5likevirus tail assembly protein family. As to quaternary structure, interacts with tail assembly protein Gp24 and tape measure protein.

In terms of biological role, promotes tail assembly by creating a scaffold for the tail tube proteins. The tail assembly proteins Gp24 and Gp25 would wrap the linear tape measure protein to create a tail assembly scaffold. It would allow polymerization of tail tube protein during which Gp24 and Gp25 are released and therefore are absent from the mature virion. The tail assembly protein Gp25 is produced by a rare -1 ribosomal frameshift. The ratio Gp24/Gp25 is important for proper tail assembly. The polypeptide is Tail assembly protein Gp25 (25) (Mycobacterium phage D29 (Mycobacteriophage D29)).